The following is a 314-amino-acid chain: Protein EXORDIUM (314 aa).

A signal peptide spans 1–21 (MYLLVFKLFLFLSLLQISVSA).

The protein belongs to the EXORDIUM family. As to expression, expressed in root tips, vascular tissue of roots, shoot apex, rosette leaves and embryos.

The protein resides in the secreted. The protein localises to the extracellular space. It localises to the apoplast. Required for cell expansion in leaves. May mediate brassinosteroid (BR)-induced leaf growth. May play a role in the control of BR responses in roots. May be involved in signaling processes that coordinate BR responses with environmental or developmental signals. The protein is Protein EXORDIUM (EXO) of Arabidopsis thaliana (Mouse-ear cress).